The sequence spans 124 residues: ATP synthase epsilon chain (124 aa).

Residues 99-118 (LEQAKTEGDAHAERRADVRL) show a composition bias toward basic and acidic residues. Residues 99 to 124 (LEQAKTEGDAHAERRADVRLRAAAGR) form a disordered region.

The protein belongs to the ATPase epsilon chain family. F-type ATPases have 2 components, CF(1) - the catalytic core - and CF(0) - the membrane proton channel. CF(1) has five subunits: alpha(3), beta(3), gamma(1), delta(1), epsilon(1). CF(0) has three main subunits: a, b and c.

It localises to the cell membrane. Produces ATP from ADP in the presence of a proton gradient across the membrane. This chain is ATP synthase epsilon chain (atpC), found in Streptomyces coelicolor (strain ATCC BAA-471 / A3(2) / M145).